A 219-amino-acid polypeptide reads, in one-letter code: Peroxiredoxin-5, mitochondrial (219 aa).

The transit peptide at 1–57 directs the protein to the mitochondrion; it reads MRLGWLRVLGCRPGSVVSRATIVEGASTTAAGTRGCLEGILEWTFGGVRGFRSAAVA. The region spanning 61–219 is the Thioredoxin domain; the sequence is IKVGDAIPSV…SLAPNILSQL (159 aa). Lys80 is subject to N6-acetyllysine. Lys88 bears the N6-acetyllysine; alternate mark. Lys88 carries the post-translational modification N6-succinyllysine; alternate. Cys105 acts as the Cysteine sulfenic acid (-SOH) intermediate in catalysis. Cys105 carries the S-palmitoyl cysteine lipid modification. Cysteines 105 and 209 form a disulfide. Lys121 is subject to N6-succinyllysine. Ser187 is subject to Phosphoserine. Residues 217–219 carry the Microbody targeting signal motif; the sequence is SQL.

Belongs to the peroxiredoxin family. Prx5 subfamily. In terms of assembly, monomer. In terms of processing, S-palmitoylated. Palmitoylation occurs on the active site, inhibiting its reactivity; therefore PRDX5 palmitoylation status determines its antioxidant capacity. Post-translationally, S-palmitoylated. Depalmitoylated by ABHD10.

Its subcellular location is the mitochondrion. It localises to the cytoplasm. It is found in the peroxisome matrix. The enzyme catalyses a hydroperoxide + [thioredoxin]-dithiol = an alcohol + [thioredoxin]-disulfide + H2O. In terms of biological role, thiol-specific peroxidase that catalyzes the reduction of hydrogen peroxide and organic hydroperoxides to water and alcohols, respectively. Plays a role in cell protection against oxidative stress by detoxifying peroxides and as sensor of hydrogen peroxide-mediated signaling events. This is Peroxiredoxin-5, mitochondrial (PRDX5) from Bos taurus (Bovine).